The sequence spans 250 residues: Golgi SNAP receptor complex member 1 (250 aa).

Residue Ala2 is modified to N-acetylalanine. Topologically, residues 2-229 (AAGTSNYWED…QRINLRKRRD (228 aa)) are cytoplasmic. Positions 9–30 (WEDLRKQARQLENELDLKLVSF) form a coiled coil. Residues 38–59 (SHSSARDGGRDRYSSDTTPLLN) form a disordered region. The segment covering 41-51 (SARDGGRDRYS) has biased composition (basic and acidic residues). Residues 68 to 95 (ETMAIEIEQLLARLTGVNDKMAEYTNSA) adopt a coiled-coil conformation. Ser141 carries the phosphoserine modification. Residues 230–250 (SLILGGVIGICTILLLLYAFH) traverse the membrane as a helical; Anchor for type IV membrane protein segment.

This sequence belongs to the GOSR1 family. In terms of assembly, component of several multiprotein Golgi SNARE complexes. Identified in a SNARE complex with BET1, STX5 and YKT6, in a SNARE complex with BET1L, STX5 and YKT6, in a SNARE complex with STX5, GOSR2, SEC22B and BET1, and in complex with STX5 and COG3. Interacts with GABARAPL2.

The protein resides in the golgi apparatus membrane. In terms of biological role, involved in transport from the ER to the Golgi apparatus as well as in intra-Golgi transport. It belongs to a super-family of proteins called t-SNAREs or soluble NSF (N-ethylmaleimide-sensitive factor) attachment protein receptor. May play a protective role against hydrogen peroxide induced cytotoxicity under glutathione depleted conditions in neuronal cells by regulating the intracellular ROS levels via inhibition of p38 MAPK (MAPK11, MAPK12, MAPK13 and MAPK14). Participates in docking and fusion stage of ER to cis-Golgi transport. Plays an important physiological role in VLDL-transport vesicle-Golgi fusion and thus in VLDL delivery to the hepatic cis-Golgi. In Cricetulus griseus (Chinese hamster), this protein is Golgi SNAP receptor complex member 1 (GOSR1).